A 250-amino-acid chain; its full sequence is 3-deoxy-manno-octulosonate cytidylyltransferase (250 aa).

This sequence belongs to the KdsB family.

It localises to the cytoplasm. It catalyses the reaction 3-deoxy-alpha-D-manno-oct-2-ulosonate + CTP = CMP-3-deoxy-beta-D-manno-octulosonate + diphosphate. It functions in the pathway nucleotide-sugar biosynthesis; CMP-3-deoxy-D-manno-octulosonate biosynthesis; CMP-3-deoxy-D-manno-octulosonate from 3-deoxy-D-manno-octulosonate and CTP: step 1/1. It participates in bacterial outer membrane biogenesis; lipopolysaccharide biosynthesis. Its function is as follows. Activates KDO (a required 8-carbon sugar) for incorporation into bacterial lipopolysaccharide in Gram-negative bacteria. This Legionella pneumophila (strain Corby) protein is 3-deoxy-manno-octulosonate cytidylyltransferase.